The primary structure comprises 375 residues: 23S rRNA (uracil(747)-C(5))-methyltransferase RlmC (375 aa).

[4Fe-4S] cluster contacts are provided by C3, C11, C14, and C87. S-adenosyl-L-methionine contacts are provided by Q212, F241, E262, and N307. Catalysis depends on C334, which acts as the Nucleophile.

It belongs to the class I-like SAM-binding methyltransferase superfamily. RNA M5U methyltransferase family. RlmC subfamily.

It carries out the reaction uridine(747) in 23S rRNA + S-adenosyl-L-methionine = 5-methyluridine(747) in 23S rRNA + S-adenosyl-L-homocysteine + H(+). In terms of biological role, catalyzes the formation of 5-methyl-uridine at position 747 (m5U747) in 23S rRNA. The chain is 23S rRNA (uracil(747)-C(5))-methyltransferase RlmC from Enterobacter sp. (strain 638).